A 398-amino-acid polypeptide reads, in one-letter code: O-methyltransferase mpaG (398 aa).

Ser-144 serves as a coordination point for (4E,8E)-10-(4,6-dihydroxy-7-methyl-3-oxo-1,3-dihydro-2-benzofuran-5-yl)-4,8-dimethyldeca-4,8-dienoate. Ser-144 provides a ligand contact to 4-farnesyl-3,5-dihydroxy-6-methylphthalide. Residue Ser-144 coordinates 6-O-desmethylmycophenolate. Asn-197 contacts S-adenosyl-L-homocysteine. (4E,8E)-10-(4,6-dihydroxy-7-methyl-3-oxo-1,3-dihydro-2-benzofuran-5-yl)-4,8-dimethyldeca-4,8-dienoate is bound at residue Tyr-199. 4-farnesyl-3,5-dihydroxy-6-methylphthalide is bound at residue Tyr-199. Tyr-199 provides a ligand contact to 6-O-desmethylmycophenolate. Tyr-203, Asp-237, Gly-239, His-244, Asp-245, Asp-264, and Arg-265 together coordinate S-adenosyl-L-homocysteine. Asp-264 contributes to the S-adenosyl-L-methionine binding site. Arg-265 and Gln-267 together coordinate (4E,8E)-10-(4,6-dihydroxy-7-methyl-3-oxo-1,3-dihydro-2-benzofuran-5-yl)-4,8-dimethyldeca-4,8-dienoate. Residue Arg-265 participates in 6-O-desmethylmycophenolate binding. 3 residues coordinate S-adenosyl-L-homocysteine: Asp-286, Ile-287, and His-302. Ser-303 contributes to the (4E,8E)-10-(4,6-dihydroxy-7-methyl-3-oxo-1,3-dihydro-2-benzofuran-5-yl)-4,8-dimethyldeca-4,8-dienoate binding site. Ser-303 provides a ligand contact to 4-farnesyl-3,5-dihydroxy-6-methylphthalide. Ser-303 contributes to the 6-O-desmethylmycophenolate binding site. His-306 (proton acceptor) is an active-site residue. Residues Glu-335 and Glu-362 contribute to the active site.

Belongs to the class I-like SAM-binding methyltransferase superfamily. Cation-independent O-methyltransferase family. COMT subfamily. As to quaternary structure, homodimer.

It localises to the cytoplasm. The protein resides in the cytosol. The catalysed reaction is (4E,8E)-10-(4,6-dihydroxy-7-methyl-3-oxo-1,3-dihydro-2-benzofuran-5-yl)-4,8-dimethyldeca-4,8-dienoate + S-adenosyl-L-methionine = (4E,8E)-10-(4-hydroxy-6-methoxy-7-methyl-3-oxo-1,3-dihydro-2-benzofuran-5-yl)-4,8-dimethyldeca-4,8-dienoate + S-adenosyl-L-homocysteine + H(+). It catalyses the reaction 4-farnesyl-3,5-dihydroxy-6-methylphthalide + S-adenosyl-L-methionine = 4-farnesyl-3,5-dihydroxy-6-methoxylphthalide + S-adenosyl-L-homocysteine + H(+). It carries out the reaction 6-O-desmethylmycophenolate + S-adenosyl-L-methionine = mycophenolate + S-adenosyl-L-homocysteine + H(+). It participates in secondary metabolite biosynthesis; terpenoid biosynthesis. O-methyltransferase; part of the gene cluster that mediates the biosynthesis of mycophenolic acid (MPA), the first isolated antibiotic natural product in the world obtained from a culture of Penicillium brevicompactum in 1893. MpaG methylates farnesyl-DHMP-3C (FDHMP-3C) to yield MFDHMP-3C. The first step of the pathway is the synthesis of 5-methylorsellinic acid (5MOA) by the cytosolic polyketide synthase mpaC. 5MOA is then converted to the phthalide compound 5,7-dihydroxy-4,6-dimethylphthalide (DHMP) by the endoplasmic reticulum-bound cytochrome P450 monooxygenase mpaDE. MpaDE first catalyzes hydroxylation of 5-MOA to 4,6-dihydroxy-2-(hydroxymethyl)-3-methylbenzoic acid (DHMB). MpaDE then acts as a lactone synthase that catalyzes the ring closure to convert DHMB into DHMP. The next step is the prenylation of DHMP by the Golgi apparatus-associated prenyltransferase mpaA to yield farnesyl-DHMP (FDHMP). The ER-bound oxygenase mpaB then mediates the oxidative cleavage the C19-C20 double bond in FDHMP to yield FDHMP-3C via a mycophenolic aldehyde intermediate. The O-methyltransferase mpaG catalyzes the methylation of FDHMP-3C to yield MFDHMP-3C. MpaG and mpaB can also switch the order in which they act and, in this case, the conversion of FDHMP to MFDHMP-3C can take place via 5-O-methyl-FDHMP (MFDHMP). After the cytosolic methylation of FDHMP-3C, MFDHMP-3C enters into peroxisomes probably via free diffusion due to its low molecular weight. Upon a peroxisomal CoA ligation reaction, catalyzed by a beta-oxidation component enzyme acyl-CoA ligase ACL891, MFDHMP-3C-CoA would then be restricted to peroxisomes for the following beta-oxidation pathway steps. The peroxisomal beta-oxidation machinery than converts MFDHMP-3C-CoA into MPA_CoA, via a beta-oxidation chain-shortening process. Finally mpaH acts as a peroxisomal acyl-CoA hydrolase with high substrate specificity toward MPA-CoA to release the final product MPA. MpaH can also hydrolyze DMMPA-CoA to release demethylmycophenolic acid (DMMPA) that is further converted to MPA by mpaG. In Penicillium brevicompactum, this protein is O-methyltransferase mpaG.